Consider the following 568-residue polypeptide: AT-rich interactive domain-containing protein 3B (568 aa).

Met1 carries the N-acetylmethionine modification. The span at 1–22 (MEPLQQQQQQQQQKQPQQPLLQ) shows a compositional bias: low complexity. The segment at 1-174 (MEPLQQQQQQ…SVPTAGQPSW (174 aa)) is disordered. Ser87 carries the post-translational modification Phosphoserine. Residues 88 to 107 (EPEEEEGGLEDEDGDDDVAE) show a composition bias toward acidic residues. Residues 151–160 (TKEDHTKDAS) are compositionally biased toward basic and acidic residues. Residues 201–374 (SRDFAKLYEL…SSPKIRFSIL (174 aa)) form an interaction with RB1 region. An ARID domain is found at 213 to 305 (DPERKEFLDD…YLYAYECEKK (93 aa)). Ser309 is modified (phosphoserine). Arg370 is modified (asymmetric dimethylarginine). Positions 378–403 (SSSGTSASSPRIPPASTLRKGDGVPV) are disordered. In terms of domain architecture, REKLES spans 425-522 (GPLEHLRERL…GVLFAQKPVV (98 aa)). Residues 495–518 (SNIGSINMSVDIDGTTYTGVLFAQ) are interaction with ARID3A. Residues 529-559 (TPQSIGSSASSSNSSSSHCSPSPTSSRGTPS) are compositionally biased toward low complexity. Residues 529 to 568 (TPQSIGSSASSSNSSSSHCSPSPTSSRGTPSAEPSTSWSL) form a disordered region.

Heterodimer with ARID3A. Interacts with unphosphorylated RB1. As to expression, expressed at high levels in testis. Also expressed in prostate, thyroid and thymus.

The protein resides in the nucleus. Functionally, transcription factor involved in the production of cranial mesenchymal tissues. Favors nuclear targeting of ARID3A. The sequence is that of AT-rich interactive domain-containing protein 3B (Arid3b) from Mus musculus (Mouse).